The sequence spans 339 residues: Holliday junction branch migration complex subunit RuvB (339 aa).

Residues 2–187 (KDVNEEERII…FGIIEHMQYY (186 aa)) form a large ATPase domain (RuvB-L) region. Residues leucine 26, arginine 27, glycine 68, lysine 71, threonine 72, threonine 73, 134 to 136 (EDF), arginine 177, tyrosine 187, and arginine 224 each bind ATP. A Mg(2+)-binding site is contributed by threonine 72. Residues 188–258 (SVEDLEKIIQ…TTKHSLHLLE (71 aa)) form a small ATPAse domain (RuvB-S) region. Residues 261 to 339 (DEGLDQTDRK…QLGYPPKDEK (79 aa)) are head domain (RuvB-H). Residues arginine 316 and arginine 321 each coordinate DNA.

It belongs to the RuvB family. As to quaternary structure, homohexamer. Forms an RuvA(8)-RuvB(12)-Holliday junction (HJ) complex. HJ DNA is sandwiched between 2 RuvA tetramers; dsDNA enters through RuvA and exits via RuvB. An RuvB hexamer assembles on each DNA strand where it exits the tetramer. Each RuvB hexamer is contacted by two RuvA subunits (via domain III) on 2 adjacent RuvB subunits; this complex drives branch migration. In the full resolvosome a probable DNA-RuvA(4)-RuvB(12)-RuvC(2) complex forms which resolves the HJ.

It localises to the cytoplasm. It carries out the reaction ATP + H2O = ADP + phosphate + H(+). Functionally, the RuvA-RuvB-RuvC complex processes Holliday junction (HJ) DNA during genetic recombination and DNA repair, while the RuvA-RuvB complex plays an important role in the rescue of blocked DNA replication forks via replication fork reversal (RFR). RuvA specifically binds to HJ cruciform DNA, conferring on it an open structure. The RuvB hexamer acts as an ATP-dependent pump, pulling dsDNA into and through the RuvAB complex. RuvB forms 2 homohexamers on either side of HJ DNA bound by 1 or 2 RuvA tetramers; 4 subunits per hexamer contact DNA at a time. Coordinated motions by a converter formed by DNA-disengaged RuvB subunits stimulates ATP hydrolysis and nucleotide exchange. Immobilization of the converter enables RuvB to convert the ATP-contained energy into a lever motion, pulling 2 nucleotides of DNA out of the RuvA tetramer per ATP hydrolyzed, thus driving DNA branch migration. The RuvB motors rotate together with the DNA substrate, which together with the progressing nucleotide cycle form the mechanistic basis for DNA recombination by continuous HJ branch migration. Branch migration allows RuvC to scan DNA until it finds its consensus sequence, where it cleaves and resolves cruciform DNA. The sequence is that of Holliday junction branch migration complex subunit RuvB from Lactobacillus johnsonii (strain CNCM I-12250 / La1 / NCC 533).